Reading from the N-terminus, the 103-residue chain is Large ribosomal subunit protein uL24 (103 aa).

The protein belongs to the universal ribosomal protein uL24 family. As to quaternary structure, part of the 50S ribosomal subunit.

One of two assembly initiator proteins, it binds directly to the 5'-end of the 23S rRNA, where it nucleates assembly of the 50S subunit. In terms of biological role, one of the proteins that surrounds the polypeptide exit tunnel on the outside of the subunit. The chain is Large ribosomal subunit protein uL24 from Anoxybacillus flavithermus (strain DSM 21510 / WK1).